The primary structure comprises 466 residues: Ribulose bisphosphate carboxylase large chain (466 aa).

N6,N6,N6-trimethyllysine is present on K5. Substrate-binding residues include N114 and T164. The active-site Proton acceptor is K166. Position 168 (K168) interacts with substrate. Mg(2+) contacts are provided by K192, D194, and E195. K192 bears the N6-carboxylysine mark. Catalysis depends on H285, which acts as the Proton acceptor. Residues R286, H318, and S370 each contribute to the substrate site.

Belongs to the RuBisCO large chain family. Type I subfamily. In terms of assembly, heterohexadecamer of 8 large chains and 8 small chains; disulfide-linked. The disulfide link is formed within the large subunit homodimers. It depends on Mg(2+) as a cofactor. In terms of processing, the disulfide bond which can form in the large chain dimeric partners within the hexadecamer appears to be associated with oxidative stress and protein turnover.

It is found in the plastid. It localises to the chloroplast. It catalyses the reaction 2 (2R)-3-phosphoglycerate + 2 H(+) = D-ribulose 1,5-bisphosphate + CO2 + H2O. The enzyme catalyses D-ribulose 1,5-bisphosphate + O2 = 2-phosphoglycolate + (2R)-3-phosphoglycerate + 2 H(+). Its function is as follows. RuBisCO catalyzes two reactions: the carboxylation of D-ribulose 1,5-bisphosphate, the primary event in carbon dioxide fixation, as well as the oxidative fragmentation of the pentose substrate in the photorespiration process. Both reactions occur simultaneously and in competition at the same active site. This chain is Ribulose bisphosphate carboxylase large chain, found in Caltha palustris (Yellow marsh marigold).